The following is a 365-amino-acid chain: Peptide chain release factor 2 (365 aa).

At glutamine 252 the chain carries N5-methylglutamine.

It belongs to the prokaryotic/mitochondrial release factor family. Post-translationally, methylated by PrmC. Methylation increases the termination efficiency of RF2.

The protein localises to the cytoplasm. Its function is as follows. Peptide chain release factor 2 directs the termination of translation in response to the peptide chain termination codons UGA and UAA. This chain is Peptide chain release factor 2, found in Escherichia coli O9:H4 (strain HS).